A 752-amino-acid chain; its full sequence is Polyribonucleotide nucleotidyltransferase (752 aa).

Mg(2+)-binding residues include Asp542 and Asp548. A KH domain is found at 608-667; it reads PRITTIQIPVSKIGELIGPKGKNINALTEETGANISIEDDGTVFISAASGEAAEAAIEKI. The S1 motif domain occupies 679-748; the sequence is GERFLGTVVK…NRGKISLVPV (70 aa).

Belongs to the polyribonucleotide nucleotidyltransferase family. Mg(2+) serves as cofactor.

It is found in the cytoplasm. The catalysed reaction is RNA(n+1) + phosphate = RNA(n) + a ribonucleoside 5'-diphosphate. In terms of biological role, involved in mRNA degradation. Catalyzes the phosphorolysis of single-stranded polyribonucleotides processively in the 3'- to 5'-direction. This is Polyribonucleotide nucleotidyltransferase from Corynebacterium efficiens (strain DSM 44549 / YS-314 / AJ 12310 / JCM 11189 / NBRC 100395).